The primary structure comprises 216 residues: GTP-binding nuclear protein Ran, testis-specific isoform (216 aa).

An N-acetylalanine modification is found at A2. The region spanning 7-171 is the Small GTPase Ran-type domain; that stretch reads PQVQFKVVLV…FWLARKLIGD (165 aa). 17-24 provides a ligand contact to GTP; that stretch reads GDGGTGKT. T24 is modified (phosphothreonine). Residues 37–45 form a switch-I region; the sequence is KEYVATLGV. K60 carries the post-translational modification N6-acetyllysine. 65 to 69 lines the GTP pocket; that stretch reads DTAGQ. The interval 68–84 is switch-II; it reads GQEKFGGLRDGYYIQAQ. The residue at position 71 (K71) is an N6-acetyllysine; alternate. A Glycyl lysine isopeptide (Lys-Gly) (interchain with G-Cter in SUMO2); alternate cross-link involves residue K71. Residue K71 forms a Glycyl lysine isopeptide (Lys-Gly) (interchain with G-Cter in ubiquitin); alternate linkage. Residue K99 is modified to N6-acetyllysine. 122–125 lines the GTP pocket; sequence NKVD. N6-acetyllysine is present on K134. Position 159 is an N6-acetyllysine; alternate (K159). K159 is subject to N6-succinyllysine; alternate.

This sequence belongs to the small GTPase superfamily. Ran family. Testis specific.

The protein resides in the nucleus. The catalysed reaction is GTP + H2O = GDP + phosphate + H(+). GTP-binding protein involved in nucleocytoplasmic transport. Required for the import of protein into the nucleus and also for RNA export. Involved in chromatin condensation and control of cell cycle. The polypeptide is GTP-binding nuclear protein Ran, testis-specific isoform (Rasl2-9) (Mus musculus (Mouse)).